Consider the following 234-residue polypeptide: Ion-translocating oxidoreductase complex subunit E (234 aa).

5 helical membrane passes run 62–82, 92–112, 116–136, 151–171, and 205–225; these read LGLG…ISLF, IPIY…LMNA, TLYQ…IIIG, IWDG…LGAL, and SFLL…LLAI.

Belongs to the NqrDE/RnfAE family. In terms of assembly, the complex is composed of six subunits: RnfA, RnfB, RnfC, RnfD, RnfE and RnfG.

The protein localises to the cell inner membrane. In terms of biological role, part of a membrane-bound complex that couples electron transfer with translocation of ions across the membrane. The chain is Ion-translocating oxidoreductase complex subunit E from Haemophilus influenzae (strain PittGG).